The primary structure comprises 371 residues: Maltose/maltodextrin import ATP-binding protein MalK (371 aa).

Residues 4-234 (VTLKNVCKAY…PENRFVAGFI (231 aa)) form the ABC transporter domain. 36–43 (GPSGCGKS) contributes to the ATP binding site.

It belongs to the ABC transporter superfamily. Maltooligosaccharide importer (TC 3.A.1.1.1) family. The complex is composed of two ATP-binding proteins (MalK), two transmembrane proteins (MalG and MalK) and a solute-binding protein (MalE).

The protein localises to the cell inner membrane. It carries out the reaction D-maltose(out) + ATP + H2O = D-maltose(in) + ADP + phosphate + H(+). Functionally, part of the ABC transporter complex MalEFGK involved in maltose/maltodextrin import. Responsible for energy coupling to the transport system. This is Maltose/maltodextrin import ATP-binding protein MalK from Vibrio vulnificus (strain CMCP6).